A 335-amino-acid polypeptide reads, in one-letter code: Tetraacyldisaccharide 4'-kinase (335 aa).

Residue 58–65 participates in ATP binding; sequence TVGGNGKT.

This sequence belongs to the LpxK family.

The enzyme catalyses a lipid A disaccharide + ATP = a lipid IVA + ADP + H(+). It functions in the pathway glycolipid biosynthesis; lipid IV(A) biosynthesis; lipid IV(A) from (3R)-3-hydroxytetradecanoyl-[acyl-carrier-protein] and UDP-N-acetyl-alpha-D-glucosamine: step 6/6. Its function is as follows. Transfers the gamma-phosphate of ATP to the 4'-position of a tetraacyldisaccharide 1-phosphate intermediate (termed DS-1-P) to form tetraacyldisaccharide 1,4'-bis-phosphate (lipid IVA). The chain is Tetraacyldisaccharide 4'-kinase from Dichelobacter nodosus (strain VCS1703A).